We begin with the raw amino-acid sequence, 260 residues long: Triosephosphate isomerase (260 aa).

11–13 contributes to the substrate binding site; it reads NWK. The active-site Electrophile is the His103. Glu175 (proton acceptor) is an active-site residue. Substrate-binding positions include Gly181, Ser220, and 241–242; that span reads GG.

It belongs to the triosephosphate isomerase family. Homodimer.

Its subcellular location is the cytoplasm. The catalysed reaction is D-glyceraldehyde 3-phosphate = dihydroxyacetone phosphate. The protein operates within carbohydrate biosynthesis; gluconeogenesis. It functions in the pathway carbohydrate degradation; glycolysis; D-glyceraldehyde 3-phosphate from glycerone phosphate: step 1/1. Functionally, involved in the gluconeogenesis. Catalyzes stereospecifically the conversion of dihydroxyacetone phosphate (DHAP) to D-glyceraldehyde-3-phosphate (G3P). This Shewanella sp. (strain MR-4) protein is Triosephosphate isomerase.